The primary structure comprises 69 residues: Putative membrane protein insertion efficiency factor (69 aa).

Belongs to the UPF0161 family.

The protein resides in the cell membrane. Its function is as follows. Could be involved in insertion of integral membrane proteins into the membrane. This is Putative membrane protein insertion efficiency factor from Clostridium botulinum (strain Kyoto / Type A2).